The primary structure comprises 296 residues: Ribosomal RNA small subunit methyltransferase H (296 aa).

S-adenosyl-L-methionine contacts are provided by residues 30 to 32 (GGH), aspartate 49, phenylalanine 77, aspartate 95, and glutamine 102.

This sequence belongs to the methyltransferase superfamily. RsmH family.

It localises to the cytoplasm. It catalyses the reaction cytidine(1402) in 16S rRNA + S-adenosyl-L-methionine = N(4)-methylcytidine(1402) in 16S rRNA + S-adenosyl-L-homocysteine + H(+). Functionally, specifically methylates the N4 position of cytidine in position 1402 (C1402) of 16S rRNA. This Hydrogenobaculum sp. (strain Y04AAS1) protein is Ribosomal RNA small subunit methyltransferase H.